The chain runs to 410 residues: MLRHGLFKDRRVFDENYIPPELRVRRGEAEALARIYLNRLLSGAGLSDVNMIYGSIGRVGIGKTTLAKFTVKRVSEAAAKEGLTVKQAYVNAFNAPNLYTILSLIVRQTGYPIQVRGAPALDILKALVDNLYVENHYLLVILDEFQSMLSSPRIAAEDLYTLLRVHEEIPSRDGVNRIGFLLVASDVRALSYMREKIPQVESQIGFKLHLPAYKSRELYTILEQRAELGLRDTVWEPRHLELISDVYGEDKGGDGSARRAIVALKMACEMAEAMGRDSLSEDLVRKAVSENEAASIQTHELEALSIHELIILRLIAEATLGGMEWINAGLLRQRYEDASLTMYNVKPRGYTQYHIYLKHLTSLGLVDAKPSGRGMRGRTTLFRLAPHLPADRLIEVVDNIIQAKMASGYE.

Residues 60-65, Y213, and R225 contribute to the ATP site; that span reads GIGKTT.

It belongs to the CDC6/cdc18 family.

Involved in regulation of DNA replication. Binds DNA. This chain is ORC1-type DNA replication protein 2 (orc2), found in Aeropyrum pernix (strain ATCC 700893 / DSM 11879 / JCM 9820 / NBRC 100138 / K1).